A 218-amino-acid polypeptide reads, in one-letter code: Protein-lysine N-methyltransferase M142.8 (218 aa).

The protein belongs to the class I-like SAM-binding methyltransferase superfamily. EFM5 family.

It is found in the cytoplasm. Its function is as follows. S-adenosyl-L-methionine-dependent protein-lysine N-methyltransferase that methylates elongation factor 1-alpha. The chain is Protein-lysine N-methyltransferase M142.8 from Caenorhabditis elegans.